The primary structure comprises 144 residues: Galectin b (144 aa).

The 138-residue stretch at 1-138 (DHIDLEFDVG…DAVLRKLCVV (138 aa)) folds into the Galectin domain.

In terms of biological role, lectin that binds beta-galactoside and a wide array of complex carbohydrates. This is Galectin b from Aplysina lactuca (Marine sponge).